The sequence spans 489 residues: Glutamyl-tRNA(Gln) amidotransferase subunit A (489 aa).

Residues Lys80 and Ser160 each act as charge relay system in the active site. Ser184 serves as the catalytic Acyl-ester intermediate.

Belongs to the amidase family. GatA subfamily. Heterotrimer of A, B and C subunits.

It carries out the reaction L-glutamyl-tRNA(Gln) + L-glutamine + ATP + H2O = L-glutaminyl-tRNA(Gln) + L-glutamate + ADP + phosphate + H(+). Its function is as follows. Allows the formation of correctly charged Gln-tRNA(Gln) through the transamidation of misacylated Glu-tRNA(Gln) in organisms which lack glutaminyl-tRNA synthetase. The reaction takes place in the presence of glutamine and ATP through an activated gamma-phospho-Glu-tRNA(Gln). The protein is Glutamyl-tRNA(Gln) amidotransferase subunit A of Wolbachia sp. subsp. Drosophila simulans (strain wRi).